The following is a 659-amino-acid chain: Protein SCARECROW 1 (659 aa).

2 disordered regions span residues 1-33 (MGSSSLLLFPSSSSSATHSSYSPSSSSHAITSL) and 188-285 (SDPA…KQRD). Pro residues predominate over residues 190–228 (PAPPPPPPPSHPALLPPDATAPPPPPTSVAALPPPPPPQ). Positions 258–271 (AAAAAAAAAAALAA) are enriched in low complexity. The stretch at 258 to 289 (AAAAAAAAAAALAAAKERKEEQRRKQRDEEGL) forms a coiled coil. A compositionally biased stretch (basic and acidic residues) spans 272–285 (AKERKEEQRRKQRD). A GRAS domain is found at 282–652 (KQRDEEGLHL…LCLLTASAWR (371 aa)). A leucine repeat I (LRI) region spans residues 289–353 (LHLLTLLLQC…VSSCLGLYAP (65 aa)). A LxCxE motif motif is present at residues 296–300 (LQCAE). The segment at 372-437 (FQVFNGISPF…GGPPRVRLTG (66 aa)) is VHIID. The VHIID motif lies at 403–407 (VHIID). Positions 447–479 (ATGKRLSDFADTLGLPFEFCPVADKAGNLDPEK) are leucine repeat II (LRII). The segment at 488–575 (VAVHWLRHSL…QQLLSREIRN (88 aa)) is PFYRE. The segment at 578 to 652 (AVGGPARTGD…LCLLTASAWR (75 aa)) is SAW.

The protein belongs to the GRAS family. As to quaternary structure, interacts with SHR1, but not with SHR2.

The protein localises to the nucleus. Its function is as follows. Transcription factor required for quiescent center cells specification and maintenance of surrounding stem cells, and for the asymmetric cell division involved in radial pattern formation in roots. Essential for cell division but not differentiation of the ground tissue. Regulates the radial organization of the shoot axial organs. Restricts SHR movment and sequesters it into the nucleus of the endodermis. The polypeptide is Protein SCARECROW 1 (SCR1) (Oryza sativa subsp. indica (Rice)).